The primary structure comprises 478 residues: Adenosylhomocysteinase (478 aa).

Substrate is bound by residues Thr-57, Asp-139, and Glu-201. Residue 202–204 (TTT) participates in NAD(+) binding. Residues Lys-231 and Asp-235 each coordinate substrate. Residues Asn-236, 265 to 270 (GYGDVG), Glu-288, Asn-323, 344 to 346 (IGH), and Asn-392 each bind NAD(+).

It belongs to the adenosylhomocysteinase family. NAD(+) serves as cofactor.

It localises to the cytoplasm. The enzyme catalyses S-adenosyl-L-homocysteine + H2O = L-homocysteine + adenosine. Its pathway is amino-acid biosynthesis; L-homocysteine biosynthesis; L-homocysteine from S-adenosyl-L-homocysteine: step 1/1. In terms of biological role, may play a key role in the regulation of the intracellular concentration of adenosylhomocysteine. The chain is Adenosylhomocysteinase from Corynebacterium glutamicum (strain R).